The chain runs to 182 residues: NADH-dependent FAD reductase (182 aa).

An NAD(+)-binding site is contributed by Asp16. FAD-binding positions include 47–48 (NS), 62–64 (CVG), and His98. An NAD(+)-binding site is contributed by His143.

This sequence belongs to the non-flavoprotein flavin reductase family. In terms of assembly, homodimer.

It carries out the reaction FADH2 + NAD(+) = FAD + NADH + 2 H(+). It participates in antibiotic biosynthesis. Its activity is regulated as follows. The SgcE6-SgcC hydroxylation activity decreases in the presence of excess FAD. Its function is as follows. Reductase component of a two-component system involved in the biosynthesis of the enediyne antitumor antibiotic C-1027. SgcE6 provides the FADH(2) required by both the halogenase SgcC3 and the monooxygenase SgcC through free diffusion. Accepts only NADH and FAD as substrates. This chain is NADH-dependent FAD reductase, found in Streptomyces globisporus.